A 334-amino-acid polypeptide reads, in one-letter code: GTP 3',8-cyclase (334 aa).

The 226-residue stretch at 11–236 folds into the Radical SAM core domain; that stretch reads GFNRKIDYLR…ESTESSMGPA (226 aa). Residue Arg20 participates in GTP binding. Positions 27 and 31 each coordinate [4Fe-4S] cluster. Tyr33 lines the S-adenosyl-L-methionine pocket. Cys34 is a [4Fe-4S] cluster binding site. Arg69 is a GTP binding site. Gly73 contributes to the S-adenosyl-L-methionine binding site. Thr100 serves as a coordination point for GTP. An S-adenosyl-L-methionine-binding site is contributed by Ser124. Lys161 lines the GTP pocket. Met195 is a binding site for S-adenosyl-L-methionine. Positions 260 and 263 each coordinate [4Fe-4S] cluster. 265 to 267 lines the GTP pocket; it reads RVR. [4Fe-4S] cluster is bound at residue Cys277.

The protein belongs to the radical SAM superfamily. MoaA family. As to quaternary structure, monomer and homodimer. [4Fe-4S] cluster serves as cofactor.

It catalyses the reaction GTP + AH2 + S-adenosyl-L-methionine = (8S)-3',8-cyclo-7,8-dihydroguanosine 5'-triphosphate + 5'-deoxyadenosine + L-methionine + A + H(+). It functions in the pathway cofactor biosynthesis; molybdopterin biosynthesis. Functionally, catalyzes the cyclization of GTP to (8S)-3',8-cyclo-7,8-dihydroguanosine 5'-triphosphate. This chain is GTP 3',8-cyclase, found in Pseudomonas putida (strain ATCC 700007 / DSM 6899 / JCM 31910 / BCRC 17059 / LMG 24140 / F1).